We begin with the raw amino-acid sequence, 485 residues long: Ribulose bisphosphate carboxylase large chain (485 aa).

Positions 1 to 2 (MS) are excised as a propeptide. Pro-3 bears the N-acetylproline mark. At Lys-14 the chain carries N6,N6,N6-trimethyllysine. Substrate contacts are provided by Asn-123 and Thr-173. The Proton acceptor role is filled by Lys-175. Lys-177 contacts substrate. Mg(2+)-binding residues include Lys-201, Asp-203, and Glu-204. Lys-201 is subject to N6-carboxylysine. The Proton acceptor role is filled by His-294. 3 residues coordinate substrate: Arg-295, His-327, and Ser-379.

Belongs to the RuBisCO large chain family. Type I subfamily. Heterohexadecamer of 8 large chains and 8 small chains; disulfide-linked. The disulfide link is formed within the large subunit homodimers. Mg(2+) serves as cofactor. The disulfide bond which can form in the large chain dimeric partners within the hexadecamer appears to be associated with oxidative stress and protein turnover.

It is found in the plastid. The protein localises to the chloroplast. The catalysed reaction is 2 (2R)-3-phosphoglycerate + 2 H(+) = D-ribulose 1,5-bisphosphate + CO2 + H2O. It catalyses the reaction D-ribulose 1,5-bisphosphate + O2 = 2-phosphoglycolate + (2R)-3-phosphoglycerate + 2 H(+). Its function is as follows. RuBisCO catalyzes two reactions: the carboxylation of D-ribulose 1,5-bisphosphate, the primary event in carbon dioxide fixation, as well as the oxidative fragmentation of the pentose substrate in the photorespiration process. Both reactions occur simultaneously and in competition at the same active site. The sequence is that of Ribulose bisphosphate carboxylase large chain from Flaveria bidentis (Coastal plain yellowtops).